A 1940-amino-acid polypeptide reads, in one-letter code: Protein ORF1940 (1940 aa).

TPR repeat units lie at residues 119-153 (IKAC…ALQY), 155-186 (FQSL…LQQI), 480-513 (RLPD…GLHG), and 617-652 (GKSM…SPTS). 2 disordered regions span residues 1160 to 1239 (PSKV…PGAV) and 1519 to 1571 (KGPS…TVTS). Over residues 1164–1185 (QNTTQPSATQNTTTQPTAQNTS) the composition is skewed to low complexity. The span at 1186-1200 (LPGATQNTTLPTPSK) shows a compositional bias: polar residues. Low complexity-rich tracts occupy residues 1201–1235 (VQNT…NTSL), 1521–1539 (PSTT…MTPP), and 1561–1571 (TPGSGSQTVTS). One copy of the TPR 5 repeat lies at 1691 to 1724 (KDLNKSVGTSVVEEAKYNSTLQTYLAGLGIKDLN). Residues 1862 to 1940 (TTTHHITPPP…AEQAEQVLLI (79 aa)) are disordered. Pro residues predominate over residues 1868–1883 (TPPPPPPPPPPPPPPK). The segment covering 1884–1894 (TQTITTTTQIT) has biased composition (low complexity). Pro residues predominate over residues 1895–1912 (PPSPPPTPPPPPPPPKSP).

This Acidianus convivator (ATV) protein is Protein ORF1940.